The primary structure comprises 128 residues: Mediator of RNA polymerase II transcription subunit 31 (128 aa).

The protein belongs to the Mediator complex subunit 31 family. As to quaternary structure, component of the Mediator complex.

Its subcellular location is the nucleus. Component of the Mediator complex, a coactivator involved in the regulated transcription of nearly all RNA polymerase II-dependent genes. Mediator functions as a bridge to convey information from gene-specific regulatory proteins to the basal RNA polymerase II transcription machinery. Mediator is recruited to promoters by direct interactions with regulatory proteins and serves as a scaffold for the assembly of a functional preinitiation complex with RNA polymerase II and the general transcription factors. This is Mediator of RNA polymerase II transcription subunit 31 (med31) from Xenopus tropicalis (Western clawed frog).